Here is a 676-residue protein sequence, read N- to C-terminus: SPARC-like protein 1 (676 aa).

An N-terminal signal peptide occupies residues 1-16 (MKTVLLLICLLGSAFT). Positions 35–44 (EKHKYTHSEM) are enriched in basic and acidic residues. Disordered regions lie at residues 35–151 (EKHK…WALR), 173–369 (NTVG…GVYR), and 385–437 (SEDN…RNST). The segment covering 95–108 (KNSLRSINFLTLHS) has biased composition (polar residues). Asparagine 182 carries an N-linked (GlcNAc...) asparagine glycan. Residues 184-202 (SEEEEAGEEEDEEWGEETD) are compositionally biased toward acidic residues. Composition is skewed to basic and acidic residues over residues 249–266 (EKFS…KEGK) and 273–291 (NHNE…KEHF). The segment covering 312-328 (NAEEDDNDSGDDGEEDL) has biased composition (acidic residues). Asparagine 318 carries N-linked (GlcNAc...) asparagine glycosylation. Residues 385–394 (SEDNHYHHEP) are compositionally biased toward basic and acidic residues. A glycan (N-linked (GlcNAc...) asparagine) is linked at asparagine 396. Low complexity predominate over residues 397 to 408 (SSSKQQLQTSSS). A glycan (N-linked (GlcNAc...) asparagine) is linked at asparagine 413. The span at 415-433 (TEHEDEVKTTGGSYHEESA) shows a compositional bias: basic and acidic residues. The N-linked (GlcNAc...) asparagine glycan is linked to asparagine 435. The 23-residue stretch at 444-466 (LCRNFHCKRGKVCQADKQGKPSC) folds into the Follistatin-like domain. Cystine bridges form between cysteine 445/cysteine 456, cysteine 450/cysteine 466, cysteine 468/cysteine 502, cysteine 474/cysteine 495, cysteine 484/cysteine 521, cysteine 527/cysteine 638, and cysteine 646/cysteine 662. The Kazal-like domain occupies 462-523 (GKPSCICQDP…HLDYMGACKH (62 aa)). Residue asparagine 488 is glycosylated (N-linked (GlcNAc...) asparagine). An EF-hand domain is found at 634–669 (PMEHCITRFFQECDGDQDKLITLKEWCHCFAIKEED). Residues aspartate 647, aspartate 649, aspartate 651, and glutamate 658 each contribute to the Ca(2+) site.

The protein belongs to the SPARC family. As to expression, glial (Mueller) cells of the neuroretina.

The protein resides in the secreted. The protein localises to the extracellular space. Its subcellular location is the extracellular matrix. Could play a role in the late stage of neuroretina morphogenesis. This chain is SPARC-like protein 1 (SPARCL1), found in Coturnix japonica (Japanese quail).